The primary structure comprises 343 residues: DNA-directed RNA polymerase subunit alpha (343 aa).

Residues 1-239 (MGETVTIQKN…DQLNVFVNFE (239 aa)) form an alpha N-terminal domain (alpha-NTD) region. The segment at 255 to 343 (FNPAFLKKVD…ELAKRFEDHY (89 aa)) is alpha C-terminal domain (alpha-CTD).

Belongs to the RNA polymerase alpha chain family. In terms of assembly, homodimer. The RNAP catalytic core consists of 2 alpha, 1 beta, 1 beta' and 1 omega subunit. When a sigma factor is associated with the core the holoenzyme is formed, which can initiate transcription.

The catalysed reaction is RNA(n) + a ribonucleoside 5'-triphosphate = RNA(n+1) + diphosphate. In terms of biological role, DNA-dependent RNA polymerase catalyzes the transcription of DNA into RNA using the four ribonucleoside triphosphates as substrates. The polypeptide is DNA-directed RNA polymerase subunit alpha (Bradyrhizobium sp. (strain BTAi1 / ATCC BAA-1182)).